A 259-amino-acid chain; its full sequence is Global transcriptional regulator CodY (259 aa).

Positions 1 to 155 (MDLLSRARKI…GATVVGMEIL (155 aa)) are GAF domain. Residues 203–222 (ASKIADRVGITRSVIVNALR) constitute a DNA-binding region (H-T-H motif). At serine 215 the chain carries Phosphoserine.

Belongs to the CodY family.

Its subcellular location is the cytoplasm. Functionally, DNA-binding global transcriptional regulator which is involved in the adaptive response to starvation and acts by directly or indirectly controlling the expression of numerous genes in response to nutrient availability. During rapid exponential growth, CodY is highly active and represses genes whose products allow adaptation to nutrient depletion. The protein is Global transcriptional regulator CodY of Oceanobacillus iheyensis (strain DSM 14371 / CIP 107618 / JCM 11309 / KCTC 3954 / HTE831).